The sequence spans 219 residues: tRNA (guanine-N(7)-)-methyltransferase (219 aa).

The S-adenosyl-L-methionine site is built by Glu46, Glu71, Asn100, and Asp122. The active site involves Asp122. Residues Lys126, Asp158, and 199 to 202 (TEYE) each bind substrate.

It belongs to the class I-like SAM-binding methyltransferase superfamily. TrmB family.

The enzyme catalyses guanosine(46) in tRNA + S-adenosyl-L-methionine = N(7)-methylguanosine(46) in tRNA + S-adenosyl-L-homocysteine. It functions in the pathway tRNA modification; N(7)-methylguanine-tRNA biosynthesis. Its function is as follows. Catalyzes the formation of N(7)-methylguanine at position 46 (m7G46) in tRNA. The sequence is that of tRNA (guanine-N(7)-)-methyltransferase from Leuconostoc mesenteroides subsp. mesenteroides (strain ATCC 8293 / DSM 20343 / BCRC 11652 / CCM 1803 / JCM 6124 / NCDO 523 / NBRC 100496 / NCIMB 8023 / NCTC 12954 / NRRL B-1118 / 37Y).